We begin with the raw amino-acid sequence, 202 residues long: UPF0301 protein mlr7511 (202 aa).

The protein belongs to the UPF0301 (AlgH) family.

This Mesorhizobium japonicum (strain LMG 29417 / CECT 9101 / MAFF 303099) (Mesorhizobium loti (strain MAFF 303099)) protein is UPF0301 protein mlr7511.